Consider the following 28-residue polypeptide: uncharacterized protein (28 aa).

Positions 1 to 18 (MLPRKYKPAYKKQAHRVK) are enriched in basic residues. The interval 1 to 28 (MLPRKYKPAYKKQAHRVKSNPQPAYTFQ) is disordered. Positions 19 to 28 (SNPQPAYTFQ) are enriched in polar residues.

This is an uncharacterized protein from Saccharomyces cerevisiae (strain ATCC 204508 / S288c) (Baker's yeast).